Here is a 316-residue protein sequence, read N- to C-terminus: tRNA dimethylallyltransferase (316 aa).

17 to 24 contacts ATP; it reads GPTASGKT. 19-24 contacts substrate; the sequence is TASGKT. 4 interaction with substrate tRNA regions span residues 42 to 45, 166 to 170, 247 to 252, and 280 to 287; these read DSAL, QRLSR, RCVGYR, and KRQITWLR.

The protein belongs to the IPP transferase family. As to quaternary structure, monomer. The cofactor is Mg(2+).

The enzyme catalyses adenosine(37) in tRNA + dimethylallyl diphosphate = N(6)-dimethylallyladenosine(37) in tRNA + diphosphate. In terms of biological role, catalyzes the transfer of a dimethylallyl group onto the adenine at position 37 in tRNAs that read codons beginning with uridine, leading to the formation of N6-(dimethylallyl)adenosine (i(6)A). This is tRNA dimethylallyltransferase from Cronobacter sakazakii (strain ATCC BAA-894) (Enterobacter sakazakii).